Reading from the N-terminus, the 625-residue chain is FMRFamide-activated amiloride-sensitive sodium channel (625 aa).

Residues 1-67 lie on the Cytoplasmic side of the membrane; that stretch reads MKYTSAATKP…IVTSRDTKRK (67 aa). The helical transmembrane segment at 68 to 89 threads the bilayer; the sequence is VIWALLVIAGFTAATLQLSLLV. The Extracellular segment spans residues 90–536; sequence RKYLQFQVVE…LADLFADIGG (447 aa). N134, N196, N303, N349, N365, N372, and N473 each carry an N-linked (GlcNAc...) asparagine glycan. A helical transmembrane segment spans residues 537-557; it reads TLGLWMGISVLTIMELIELVI. Residues 558-625 lie on the Cytoplasmic side of the membrane; the sequence is RLTGLVFNSE…DFRRGVESPV (68 aa). The tract at residues 570–591 is disordered; the sequence is LPRGPTTVNNNNGSNNHSQSTS. The segment covering 575–591 has biased composition (low complexity); the sequence is TTVNNNNGSNNHSQSTS.

The protein belongs to the amiloride-sensitive sodium channel (TC 1.A.6) family. In terms of tissue distribution, muscle and nervous tissue.

It localises to the membrane. Its function is as follows. FMRFamide-gated ionotropic receptor. The chain is FMRFamide-activated amiloride-sensitive sodium channel from Cornu aspersum (Brown garden snail).